Consider the following 601-residue polypeptide: Elongation factor 4 (601 aa).

The tr-type G domain occupies 5-187 (SNIRNFAIIA…AIVTKLPSPN (183 aa)). GTP contacts are provided by residues 17–22 (DHGKST) and 134–137 (NKID).

The protein belongs to the TRAFAC class translation factor GTPase superfamily. Classic translation factor GTPase family. LepA subfamily.

It localises to the cell inner membrane. The catalysed reaction is GTP + H2O = GDP + phosphate + H(+). In terms of biological role, required for accurate and efficient protein synthesis under certain stress conditions. May act as a fidelity factor of the translation reaction, by catalyzing a one-codon backward translocation of tRNAs on improperly translocated ribosomes. Back-translocation proceeds from a post-translocation (POST) complex to a pre-translocation (PRE) complex, thus giving elongation factor G a second chance to translocate the tRNAs correctly. Binds to ribosomes in a GTP-dependent manner. The chain is Elongation factor 4 from Orientia tsutsugamushi (strain Ikeda) (Rickettsia tsutsugamushi).